A 2026-amino-acid chain; its full sequence is E3 ubiquitin-protein ligase TRIP12 (2026 aa).

3 stretches are compositionally biased toward polar residues: residues 1–10 (MSNRPNSNPG), 32–42 (GRNSLSLSVGS), and 73–84 (SSVSEPNITFSP). A disordered region spans residues 1–437 (MSNRPNSNPG…SGESESDDSE (437 aa)). Composition is skewed to low complexity over residues 94-112 (SSHF…AISP), 135-161 (AEPA…STPS), 171-188 (LLSS…SAAG), and 199-241 (AAKP…SSAA). Residues 359 to 371 (QKTTGSCASTSRR) show a composition bias toward polar residues. Residues 379 to 391 (GAAEARRQEKMAD) are compositionally biased toward basic and acidic residues. Residues 392 to 404 (SDNNQDGANSSAA) are compositionally biased toward polar residues. A compositionally biased stretch (low complexity) spans 412–430 (GASASSSVAGAVGMTTSGE). Positions 789-876 (MLKKGSAQTT…DPELAKCFIK (88 aa)) constitute a WWE domain. Disordered stretches follow at residues 1008–1123 (SNVT…SVSN) and 1441–1470 (GCKD…KQDE). Positions 1040–1053 (KRKRLPKRGPRRPK) are enriched in basic residues. A compositionally biased stretch (basic and acidic residues) spans 1056–1065 (PPRDDDKVDN). Positions 1068–1079 (KSPTTTQSPKSS) are enriched in low complexity. The span at 1094–1104 (TQANSANSEPS) shows a compositional bias: polar residues. Residues 1530–1604 (EIIPTGEFIN…AMQRLLDTNP (75 aa)) are K-box. Residues 1919–2026 (PDHGYTHDSR…REGQQSFHLS (108 aa)) form the HECT domain. The Glycyl thioester intermediate role is filled by C1993.

This sequence belongs to the UPL family. K-HECT subfamily.

It localises to the nucleus. The protein resides in the nucleoplasm. The enzyme catalyses S-ubiquitinyl-[E2 ubiquitin-conjugating enzyme]-L-cysteine + [acceptor protein]-L-lysine = [E2 ubiquitin-conjugating enzyme]-L-cysteine + N(6)-ubiquitinyl-[acceptor protein]-L-lysine.. Its pathway is protein modification; protein ubiquitination. Functionally, E3 ubiquitin-protein ligase involved in ubiquitin fusion degradation (UFD) pathway and regulation of DNA repair. Part of the ubiquitin fusion degradation (UFD) pathway, a process that mediates ubiquitination of protein at their N-terminus, regardless of the presence of lysine residues in target proteins. Acts as a key regulator of DNA damage response by acting as a suppressor of RNF168, an E3 ubiquitin-protein ligase that promotes accumulation of 'Lys-63'-linked histone H2A and H2AX at DNA damage sites, thereby acting as a guard against excessive spreading of ubiquitinated chromatin at damaged chromosomes. The sequence is that of E3 ubiquitin-protein ligase TRIP12 (trip12) from Danio rerio (Zebrafish).